The sequence spans 346 residues: Elongation factor Ts (346 aa).

The tract at residues 80 to 83 (TDFV) is involved in Mg(2+) ion dislocation from EF-Tu.

This sequence belongs to the EF-Ts family.

The protein resides in the cytoplasm. Associates with the EF-Tu.GDP complex and induces the exchange of GDP to GTP. It remains bound to the aminoacyl-tRNA.EF-Tu.GTP complex up to the GTP hydrolysis stage on the ribosome. In Streptococcus pyogenes serotype M18 (strain MGAS8232), this protein is Elongation factor Ts.